The sequence spans 224 residues: 7-cyano-7-deazaguanine synthase (224 aa).

Position 10–20 (10–20 (LSGGLDSATVV)) interacts with ATP. Residues Cys-189, Cys-199, Cys-202, and Cys-205 each coordinate Zn(2+).

Belongs to the QueC family. It depends on Zn(2+) as a cofactor.

It catalyses the reaction 7-carboxy-7-deazaguanine + NH4(+) + ATP = 7-cyano-7-deazaguanine + ADP + phosphate + H2O + H(+). It participates in purine metabolism; 7-cyano-7-deazaguanine biosynthesis. Catalyzes the ATP-dependent conversion of 7-carboxy-7-deazaguanine (CDG) to 7-cyano-7-deazaguanine (preQ(0)). The protein is 7-cyano-7-deazaguanine synthase of Pseudomonas putida (strain ATCC 47054 / DSM 6125 / CFBP 8728 / NCIMB 11950 / KT2440).